A 203-amino-acid polypeptide reads, in one-letter code: ATP-dependent Clp protease proteolytic subunit 1 (203 aa).

Serine 98 serves as the catalytic Nucleophile. The active site involves histidine 123.

The protein belongs to the peptidase S14 family. As to quaternary structure, fourteen ClpP subunits assemble into 2 heptameric rings which stack back to back to give a disk-like structure with a central cavity, resembling the structure of eukaryotic proteasomes.

The protein localises to the cytoplasm. It carries out the reaction Hydrolysis of proteins to small peptides in the presence of ATP and magnesium. alpha-casein is the usual test substrate. In the absence of ATP, only oligopeptides shorter than five residues are hydrolyzed (such as succinyl-Leu-Tyr-|-NHMec, and Leu-Tyr-Leu-|-Tyr-Trp, in which cleavage of the -Tyr-|-Leu- and -Tyr-|-Trp bonds also occurs).. In terms of biological role, cleaves peptides in various proteins in a process that requires ATP hydrolysis. Has a chymotrypsin-like activity. Plays a major role in the degradation of misfolded proteins. This Chlamydia felis (strain Fe/C-56) (Chlamydophila felis) protein is ATP-dependent Clp protease proteolytic subunit 1.